Here is a 4146-residue protein sequence, read N- to C-terminus: DNA-dependent protein kinase catalytic subunit (4146 aa).

4 HEAT repeats span residues 308–343, 925–962, 1026–1062, and 1075–1111; these read DDYQSLFEVISKWCGHTNGEMKKLAFAALDSFLKQI, VIYLDMFLPHITELALSTSDRQTKVAACELLHSIVAFM, QDTVALLEAILTGIVDPVDSTLRDFCGQCIQEFLRWS, and PVNTTSLFKRLYSLALHPNAFKRLGAALAFNNIYRDF. 2 TPR repeats span residues 1745–1778 and 1974–2007; these read PMKSDEFPKGTLKFNNYVDCIKKFLDALELSQSP and VFSELKFYQGFLFTEKKEKNLLIFENLIDLQRNY. A Phosphoserine; by autocatalysis modification is found at Ser2075. Position 2631 is a phosphothreonine; by autocatalysis (Thr2631). Ser2634 bears the Phosphoserine; by autocatalysis mark. A phosphothreonine; by autocatalysis mark is found at Thr2659 and Thr2668. The FAT domain maps to 2873 to 3556; sequence FIACVQDMCY…VYPFMVSGES (684 aa). The PI3K/PI4K catalytic domain maps to 3739-4071; sequence FDERVSVMAS…IHCAKRKLDG (333 aa). Residues 3745-3751 form a G-loop region; that stretch reads VMASIRK. The catalytic loop stretch occupies residues 3937 to 3945; it reads GIGDRHLSN. Residues 3957–3982 are activation loop; it reads GIDFGHAFGTATQFLPVPELMPFRLT. Residues 4114 to 4146 form the FATC domain; that stretch reads DGLTEETQVQCLIDQATDPNILGRVWKGWEPWI.

It belongs to the PI3/PI4-kinase family. In terms of assembly, DNA-PK is a heterotrimer of prkdc and the Ku dimer (composed of xrcc6/Ku70 and xrcc5/Ku86). Component of the core long-range non-homologous end joining (NHEJ) complex (also named DNA-PK complex) composed of prkdc, lig4, xrcc4, xrcc6/ku70, xrcc5/ku86 and nhej1/xlf. Additional component of the NHEJ complex includes paxx. Following autophosphorylation, prkdc dissociates from DNA. In terms of processing, autophosphorylated at two clusters, the T2609 cluster and the S2056 cluster. Autophosphorylated on Ser-2075, Thr-2631, Thr-2659 and Thr-2668. Ser-2075 and Thr-2668 are DNA damage-inducible phosphorylation sites (inducible with ionizing radiation, IR) dephosphorylated by PPP5C. Autophosphorylation induces a conformational change that leads to remodeling of the DNA-PK complex, requisite for efficient end processing and DNA repair. Autophosphorylation in trans within DNA-PK complexes loaded on DNA ends leads to the dissociation of PRKDC from DNA and the transition into the short-range NHEJ complex. Autophosphorylation of the T2609 cluster is required for hematopoietic development and protein synthesis in erythrocytes precursors.

It is found in the nucleus. The protein resides in the nucleolus. It catalyses the reaction L-seryl-[protein] + ATP = O-phospho-L-seryl-[protein] + ADP + H(+). The catalysed reaction is L-threonyl-[protein] + ATP = O-phospho-L-threonyl-[protein] + ADP + H(+). In terms of biological role, serine/threonine-protein kinase that acts as a molecular sensor for DNA damage. Involved in DNA nonhomologous end joining (NHEJ) required for double-strand break (DSB) repair and V(D)J recombination. Must be bound to DNA to express its catalytic properties. Promotes processing of hairpin DNA structures in V(D)J recombination by activation of the hairpin endonuclease artemis (DCLRE1C). Recruited by XRCC5 and XRCC6 to DNA ends and is required to (1) protect and align broken ends of DNA, thereby preventing their degradation, (2) and sequester the DSB for repair by NHEJ. Acts as a scaffold protein to aid the localization of DNA repair proteins to the site of damage. The assembly of the DNA-PK complex at DNA ends is also required for the NHEJ ligation step. Found at the ends of chromosomes, suggesting a further role in the maintenance of telomeric stability and the prevention of chromosomal end fusion. As part of the DNA-PK complex, involved in the early steps of ribosome assembly by promoting the processing of precursor rRNA into mature 18S rRNA in the small-subunit processome. Recognizes the substrate consensus sequence [ST]-Q. Phosphorylates 'Ser-139' of histone variant H2AX, thereby regulating DNA damage response mechanism. This Xenopus laevis (African clawed frog) protein is DNA-dependent protein kinase catalytic subunit (prkdc).